Here is a 555-residue protein sequence, read N- to C-terminus: CTP synthase (555 aa).

The segment at 1–267 (MTKFVFVTGG…AQQVLKFMHL (267 aa)) is amidoligase domain. A CTP-binding site is contributed by serine 13. Residue serine 13 participates in UTP binding. ATP-binding positions include 14–19 (SIGKGI) and aspartate 71. Aspartate 71 and glutamate 141 together coordinate Mg(2+). Residues 148 to 150 (DIE), 188 to 193 (KTKPTQ), and lysine 224 contribute to the CTP site. UTP-binding positions include 188–193 (KTKPTQ) and lysine 224. ATP is bound at residue alanine 242. The Glutamine amidotransferase type-1 domain maps to 299–535 (YVQLSDAYLS…VGACLADNGN (237 aa)). Position 354 (glycine 354) interacts with L-glutamine. Catalysis depends on cysteine 381, which acts as the Nucleophile; for glutamine hydrolysis. L-glutamine contacts are provided by residues 382-385 (LGMQ), glutamate 405, and arginine 463. Residues histidine 508 and glutamate 510 contribute to the active site. The tract at residues 536–555 (NANHHDSTPAEPLVSEPLSS) is disordered.

Belongs to the CTP synthase family. In terms of assembly, homotetramer.

The enzyme catalyses UTP + L-glutamine + ATP + H2O = CTP + L-glutamate + ADP + phosphate + 2 H(+). It carries out the reaction L-glutamine + H2O = L-glutamate + NH4(+). The catalysed reaction is UTP + NH4(+) + ATP = CTP + ADP + phosphate + 2 H(+). The protein operates within pyrimidine metabolism; CTP biosynthesis via de novo pathway; CTP from UDP: step 2/2. With respect to regulation, allosterically activated by GTP, when glutamine is the substrate; GTP has no effect on the reaction when ammonia is the substrate. The allosteric effector GTP functions by stabilizing the protein conformation that binds the tetrahedral intermediate(s) formed during glutamine hydrolysis. Inhibited by the product CTP, via allosteric rather than competitive inhibition. Functionally, catalyzes the ATP-dependent amination of UTP to CTP with either L-glutamine or ammonia as the source of nitrogen. Regulates intracellular CTP levels through interactions with the four ribonucleotide triphosphates. The protein is CTP synthase of Acaryochloris marina (strain MBIC 11017).